The primary structure comprises 195 residues: Molybdenum cofactor guanylyltransferase (195 aa).

GTP is bound by residues L12 to G14, K25, N53, D70, and D100. D100 is a Mg(2+) binding site.

It belongs to the MobA family. Monomer. Mg(2+) serves as cofactor.

Its subcellular location is the cytoplasm. The enzyme catalyses Mo-molybdopterin + GTP + H(+) = Mo-molybdopterin guanine dinucleotide + diphosphate. Transfers a GMP moiety from GTP to Mo-molybdopterin (Mo-MPT) cofactor (Moco or molybdenum cofactor) to form Mo-molybdopterin guanine dinucleotide (Mo-MGD) cofactor. In Vibrio vulnificus (strain YJ016), this protein is Molybdenum cofactor guanylyltransferase.